A 957-amino-acid polypeptide reads, in one-letter code: Glycine dehydrogenase (decarboxylating) (957 aa).

Lysine 708 carries the N6-(pyridoxal phosphate)lysine modification.

The protein belongs to the GcvP family. As to quaternary structure, the glycine cleavage system is composed of four proteins: P, T, L and H. Pyridoxal 5'-phosphate is required as a cofactor.

The enzyme catalyses N(6)-[(R)-lipoyl]-L-lysyl-[glycine-cleavage complex H protein] + glycine + H(+) = N(6)-[(R)-S(8)-aminomethyldihydrolipoyl]-L-lysyl-[glycine-cleavage complex H protein] + CO2. The glycine cleavage system catalyzes the degradation of glycine. The P protein binds the alpha-amino group of glycine through its pyridoxal phosphate cofactor; CO(2) is released and the remaining methylamine moiety is then transferred to the lipoamide cofactor of the H protein. The chain is Glycine dehydrogenase (decarboxylating) from Escherichia coli (strain K12 / MC4100 / BW2952).